The chain runs to 204 residues: MELKQSLSTHLEAEKPLRRYGAVEETAWKTERLGRNQLDIISMAETTMMPEEIELEMAKIQRLREVLVRRESELRFMMDDIQLCKDIMDLKQELQNLVAIPEKEKTKLQKQREDELIQKIHKLVQKRDFLVDDAEVERLREQEEDKEMADFLRIKLKPLDKVTKSPASSRAEKKAEPPPSKPTVAKTGLALIKDCCGATQCNIM.

In terms of domain architecture, bMERB spans 3–150; the sequence is LKQSLSTHLE…EQEEDKEMAD (148 aa). The disordered stretch occupies residues 162–187; the sequence is VTKSPASSRAEKKAEPPPSKPTVAKT.

In Homo sapiens (Human), this protein is bMERB domain-containing protein 1.